The chain runs to 4513 residues: Dynein-1-beta heavy chain, flagellar inner arm I1 complex (4513 aa).

The stem stretch occupies residues M1–Y1806. 3 coiled-coil regions span residues K192–D223, T1544–F1577, and T1704–K1727. AAA stretches follow at residues Y1807 to R2028, R2089 to N2350, F2458 to G2706, and D2808 to R3059. ATP contacts are provided by residues G1845–T1852, G2127–S2134, G2497–T2504, and G2848–K2855. Coiled-coil stretches lie at residues A3107–K3193, K3301–E3384, and R3499–Q3519. A stalk region spans residues A3107–E3384. AAA stretches follow at residues L3443–A3674 and A3890–S4109.

The I1 inner arm complex (also known as the f dynein complex) is a two-headed isoform composed of two heavy chains (1-alpha and 1-beta), three intermediate chains and three light chains. I1 occupies a specific position proximal to the first radial spoke and repeats every 96 nm along the length of the axoneme.

Its subcellular location is the cell projection. The protein resides in the cilium. The protein localises to the flagellum. It is found in the cytoplasm. It localises to the cytoskeleton. Its subcellular location is the flagellum axoneme. In terms of biological role, force generating protein of eukaryotic cilia and flagella. Produces force towards the minus ends of microtubules. Dynein has ATPase activity; the force-producing power stroke is thought to occur on release of ADP. Required for assembly of the I1 inner arm complex and its targeting to the appropriate axoneme location. Also required for phototaxis. The chain is Dynein-1-beta heavy chain, flagellar inner arm I1 complex (DHC10) from Chlamydomonas reinhardtii (Chlamydomonas smithii).